A 212-amino-acid polypeptide reads, in one-letter code: ATP-dependent Clp protease proteolytic subunit (212 aa).

Serine 106 functions as the Nucleophile in the catalytic mechanism. The active site involves histidine 131.

Belongs to the peptidase S14 family. Fourteen ClpP subunits assemble into 2 heptameric rings which stack back to back to give a disk-like structure with a central cavity, resembling the structure of eukaryotic proteasomes.

The protein localises to the cytoplasm. It catalyses the reaction Hydrolysis of proteins to small peptides in the presence of ATP and magnesium. alpha-casein is the usual test substrate. In the absence of ATP, only oligopeptides shorter than five residues are hydrolyzed (such as succinyl-Leu-Tyr-|-NHMec, and Leu-Tyr-Leu-|-Tyr-Trp, in which cleavage of the -Tyr-|-Leu- and -Tyr-|-Trp bonds also occurs).. Functionally, cleaves peptides in various proteins in a process that requires ATP hydrolysis. Has a chymotrypsin-like activity. Plays a major role in the degradation of misfolded proteins. The sequence is that of ATP-dependent Clp protease proteolytic subunit from Rhodopseudomonas palustris (strain ATCC BAA-98 / CGA009).